Reading from the N-terminus, the 147-residue chain is MKVLLIKDVKALGKAGEIKEVKDGYGQNFLIAKGFAKAATNEVLRKYESDKKKEAENLRFEIANLEKLKEELSKITLEISKPVGANGSLFGGVTKDEIAHALKEQSHIEIDKKSLECDTFKSLGLHEVSVKLGHAIHAKFNINIKAE.

This sequence belongs to the bacterial ribosomal protein bL9 family.

In terms of biological role, binds to the 23S rRNA. The polypeptide is Large ribosomal subunit protein bL9 (Campylobacter jejuni subsp. jejuni serotype O:6 (strain 81116 / NCTC 11828)).